A 192-amino-acid polypeptide reads, in one-letter code: Protein GrpE (192 aa).

The segment at 1 to 43 (MQENKQPSEIQGELPQPPDGESVPPQPTNEQAPPDTDTMPRIE) is disordered.

It belongs to the GrpE family. As to quaternary structure, homodimer.

Its subcellular location is the cytoplasm. In terms of biological role, participates actively in the response to hyperosmotic and heat shock by preventing the aggregation of stress-denatured proteins, in association with DnaK and GrpE. It is the nucleotide exchange factor for DnaK and may function as a thermosensor. Unfolded proteins bind initially to DnaJ; upon interaction with the DnaJ-bound protein, DnaK hydrolyzes its bound ATP, resulting in the formation of a stable complex. GrpE releases ADP from DnaK; ATP binding to DnaK triggers the release of the substrate protein, thus completing the reaction cycle. Several rounds of ATP-dependent interactions between DnaJ, DnaK and GrpE are required for fully efficient folding. The polypeptide is Protein GrpE (Aromatoleum aromaticum (strain DSM 19018 / LMG 30748 / EbN1) (Azoarcus sp. (strain EbN1))).